Here is a 359-residue protein sequence, read N- to C-terminus: Aminomethyltransferase (359 aa).

This sequence belongs to the GcvT family. As to quaternary structure, the glycine cleavage system is composed of four proteins: P, T, L and H.

It catalyses the reaction N(6)-[(R)-S(8)-aminomethyldihydrolipoyl]-L-lysyl-[protein] + (6S)-5,6,7,8-tetrahydrofolate = N(6)-[(R)-dihydrolipoyl]-L-lysyl-[protein] + (6R)-5,10-methylene-5,6,7,8-tetrahydrofolate + NH4(+). Functionally, the glycine cleavage system catalyzes the degradation of glycine. In Idiomarina loihiensis (strain ATCC BAA-735 / DSM 15497 / L2-TR), this protein is Aminomethyltransferase.